Here is a 184-residue protein sequence, read N- to C-terminus: ATP synthase subunit b, chloroplastic (184 aa).

Residues 27–49 (LATNPINLSVVFGVLIFFGKGVL) traverse the membrane as a helical segment.

Belongs to the ATPase B chain family. F-type ATPases have 2 components, F(1) - the catalytic core - and F(0) - the membrane proton channel. F(1) has five subunits: alpha(3), beta(3), gamma(1), delta(1), epsilon(1). F(0) has four main subunits: a(1), b(1), b'(1) and c(10-14). The alpha and beta chains form an alternating ring which encloses part of the gamma chain. F(1) is attached to F(0) by a central stalk formed by the gamma and epsilon chains, while a peripheral stalk is formed by the delta, b and b' chains.

It localises to the plastid. The protein localises to the chloroplast thylakoid membrane. Functionally, f(1)F(0) ATP synthase produces ATP from ADP in the presence of a proton or sodium gradient. F-type ATPases consist of two structural domains, F(1) containing the extramembraneous catalytic core and F(0) containing the membrane proton channel, linked together by a central stalk and a peripheral stalk. During catalysis, ATP synthesis in the catalytic domain of F(1) is coupled via a rotary mechanism of the central stalk subunits to proton translocation. Its function is as follows. Component of the F(0) channel, it forms part of the peripheral stalk, linking F(1) to F(0). The sequence is that of ATP synthase subunit b, chloroplastic from Draba nemorosa (Woodland whitlowgrass).